The following is a 130-amino-acid chain: Seminal plasma protein pB1 (130 aa).

The first 25 residues, 1–25 (MAPRLGIFLLWAGVSVFLPLDPVNG), serve as a signal peptide directing secretion. Fibronectin type-II domains follow at residues 39–83 (TSDD…YCRS) and 84–130 (TDYA…WRYC). Disulfide bonds link Cys44/Cys68, Cys58/Cys81, Cys89/Cys115, and Cys103/Cys130.

It belongs to the seminal plasma protein family. As to expression, component of seminal plasma.

The protein localises to the secreted. Functionally, may form a complex with spermadhesin AQN-1 which possesses phosphorylcholine-binding activity. The chain is Seminal plasma protein pB1 from Sus scrofa (Pig).